We begin with the raw amino-acid sequence, 508 residues long: GMP synthase [glutamine-hydrolyzing] (508 aa).

In terms of domain architecture, Glutamine amidotransferase type-1 spans 1-189 (MILVLDFGSQ…ALLVCGCEKT (189 aa)). Cys78 acts as the Nucleophile in catalysis. Active-site residues include His163 and Glu165. Residues 190 to 383 (WGMQHFAQRE…LGVSQDFLMR (194 aa)) enclose the GMPS ATP-PPase domain. 217 to 223 (SGGVDST) serves as a coordination point for ATP.

As to quaternary structure, homodimer.

The enzyme catalyses XMP + L-glutamine + ATP + H2O = GMP + L-glutamate + AMP + diphosphate + 2 H(+). The protein operates within purine metabolism; GMP biosynthesis; GMP from XMP (L-Gln route): step 1/1. Its function is as follows. Catalyzes the synthesis of GMP from XMP. This is GMP synthase [glutamine-hydrolyzing] from Helicobacter pylori (strain P12).